Reading from the N-terminus, the 232-residue chain is Phosphatidylserine decarboxylase proenzyme (232 aa).

Ser-190 serves as the catalytic Schiff-base intermediate with substrate; via pyruvic acid. Ser-190 is subject to Pyruvic acid (Ser); by autocatalysis.

Belongs to the phosphatidylserine decarboxylase family. PSD-A subfamily. As to quaternary structure, heterodimer of a large membrane-associated beta subunit and a small pyruvoyl-containing alpha subunit. Requires pyruvate as cofactor. Is synthesized initially as an inactive proenzyme. Formation of the active enzyme involves a self-maturation process in which the active site pyruvoyl group is generated from an internal serine residue via an autocatalytic post-translational modification. Two non-identical subunits are generated from the proenzyme in this reaction, and the pyruvate is formed at the N-terminus of the alpha chain, which is derived from the carboxyl end of the proenzyme. The post-translation cleavage follows an unusual pathway, termed non-hydrolytic serinolysis, in which the side chain hydroxyl group of the serine supplies its oxygen atom to form the C-terminus of the beta chain, while the remainder of the serine residue undergoes an oxidative deamination to produce ammonia and the pyruvoyl prosthetic group on the alpha chain.

It localises to the cell membrane. The catalysed reaction is a 1,2-diacyl-sn-glycero-3-phospho-L-serine + H(+) = a 1,2-diacyl-sn-glycero-3-phosphoethanolamine + CO2. It functions in the pathway phospholipid metabolism; phosphatidylethanolamine biosynthesis; phosphatidylethanolamine from CDP-diacylglycerol: step 2/2. In terms of biological role, catalyzes the formation of phosphatidylethanolamine (PtdEtn) from phosphatidylserine (PtdSer). This chain is Phosphatidylserine decarboxylase proenzyme, found in Brucella anthropi (strain ATCC 49188 / DSM 6882 / CCUG 24695 / JCM 21032 / LMG 3331 / NBRC 15819 / NCTC 12168 / Alc 37) (Ochrobactrum anthropi).